The chain runs to 266 residues: Hydroxyethylthiazole kinase (266 aa).

Methionine 43 provides a ligand contact to substrate. ATP is bound by residues arginine 119 and threonine 166. Glycine 193 provides a ligand contact to substrate.

The protein belongs to the Thz kinase family. Mg(2+) serves as cofactor.

The catalysed reaction is 5-(2-hydroxyethyl)-4-methylthiazole + ATP = 4-methyl-5-(2-phosphooxyethyl)-thiazole + ADP + H(+). The protein operates within cofactor biosynthesis; thiamine diphosphate biosynthesis; 4-methyl-5-(2-phosphoethyl)-thiazole from 5-(2-hydroxyethyl)-4-methylthiazole: step 1/1. Its function is as follows. Catalyzes the phosphorylation of the hydroxyl group of 4-methyl-5-beta-hydroxyethylthiazole (THZ). This Methanococcus maripaludis (strain C6 / ATCC BAA-1332) protein is Hydroxyethylthiazole kinase.